We begin with the raw amino-acid sequence, 154 residues long: Large ribosomal subunit protein uL13 (154 aa).

It belongs to the universal ribosomal protein uL13 family. As to quaternary structure, part of the 50S ribosomal subunit.

Its function is as follows. This protein is one of the early assembly proteins of the 50S ribosomal subunit, although it is not seen to bind rRNA by itself. It is important during the early stages of 50S assembly. The sequence is that of Large ribosomal subunit protein uL13 from Brucella melitensis biotype 2 (strain ATCC 23457).